The sequence spans 457 residues: Sensor protein CpxA (457 aa).

Topologically, residues 1–7 (MIGSLTA) are cytoplasmic. Residues 8-29 (RIFAIFWLTLALVLMLVLMLPK) traverse the membrane as a helical segment. The Periplasmic segment spans residues 30–163 (LDSRQMTELL…SDFINLLFDR (134 aa)). A helical transmembrane segment spans residues 164-184 (PLLLLIVTMLVSTPLLLWLAW). Residues 185–237 (SLAKPARKLKNAADEVAQGNLRQHPELEAGPQEFLAAGASFNQMVTALERMMT) enclose the HAMP domain. The Cytoplasmic portion of the chain corresponds to 185-457 (SLAKPARKLK…VIWLPLYKRS (273 aa)). A Histidine kinase domain is found at 245–455 (DISHELRTPL…RLVIWLPLYK (211 aa)). A Phosphohistidine; by autocatalysis modification is found at His-248.

The protein localises to the cell inner membrane. It catalyses the reaction ATP + protein L-histidine = ADP + protein N-phospho-L-histidine.. Functionally, this protein is involved in several diverse cellular processes, such as the functioning of acetohydroxyacid synthetase I, in the biosynthesis of isoleucine and valine, the TraJ protein activation activity for tra gene expression in F plasmid, and the synthesis, translocation, or stability of cell envelope proteins. Activates CpxR by phosphorylation. The sequence is that of Sensor protein CpxA (cpxA) from Escherichia coli O157:H7.